The following is a 709-amino-acid chain: Methylmalonyl-CoA mutase (709 aa).

Residues 73-77 (TIRQY), 183-185 (TIQ), Arg-195, Lys-222, His-232, and 271-273 (RLS) each bind substrate. The region spanning 579–709 (RPRMLVVKMG…ILDLIREARS (131 aa)) is the B12-binding domain. Residue His-592 coordinates adenosylcob(III)alamin.

The protein belongs to the methylmalonyl-CoA mutase family. In terms of assembly, homodimer. The cofactor is adenosylcob(III)alamin.

It catalyses the reaction (R)-methylmalonyl-CoA = succinyl-CoA. Its pathway is metabolic intermediate metabolism; propanoyl-CoA degradation; succinyl-CoA from propanoyl-CoA: step 3/3. Its function is as follows. Radical enzyme that catalyzes the transformation of (2R)-methylmalonyl-CoA to succinyl-CoA. Is involved in the ethylmalonyl-CoA pathway for acetyl-CoA assimilation required for R.sphaeroides growth on acetate as sole carbon source. In Cereibacter sphaeroides (strain ATCC 17023 / DSM 158 / JCM 6121 / CCUG 31486 / LMG 2827 / NBRC 12203 / NCIMB 8253 / ATH 2.4.1.) (Rhodobacter sphaeroides), this protein is Methylmalonyl-CoA mutase.